The following is a 502-amino-acid chain: Facilitated trehalose transporter Tret1 (502 aa).

The Cytoplasmic portion of the chain corresponds to 1–38 (MGVENTKQTMSSQNIKPAKDSDDVLHTQFKEVKRSPMR). The chain crosses the membrane as a helical span at residues 39–59 (YTMQLLAALAVSMASLMIGYS). The Extracellular segment spans residues 60–83 (SSYTSPALVSMRDNTTATFEVTMD). Asparagine 73 carries N-linked (GlcNAc...) asparagine glycosylation. The helical transmembrane segment at 84–104 (MAMWIGSIMPLSALIGGIIGG) threads the bilayer. Over 105 to 120 (PCIEYIGRRNTILSTA) the chain is Cytoplasmic. The chain crosses the membrane as a helical span at residues 121–141 (LPFLAGWLFIALATNVAMILV). The Extracellular segment spans residues 142-144 (GRS). A helical membrane pass occupies residues 145–165 (ICGFCVGVASLSLPVYLGESI). Over 166–172 (QPEVRGS) the chain is Cytoplasmic. The chain crosses the membrane as a helical span at residues 173-193 (LGLLPTVFGNSGILMCFTAGM). At 194–199 (YLAWRN) the chain is on the extracellular side. Residues 200–220 (LALLGACIPIIFLILMFLIPE) form a helical membrane-spanning segment. Over 221 to 282 (TPRWYISKGK…ELFRKNHIKP (62 aa)) the chain is Cytoplasmic. Residues 283–303 (VFISLGLMFFQQFSGINAVIF) form a helical membrane-spanning segment. Residues 304–319 (YTVQIFKDSGSTVDEN) are Extracellular-facing. N-linked (GlcNAc...) asparagine glycosylation occurs at asparagine 319. Residues 320–340 (LSTIIVGLVNFISTFVAAMII) traverse the membrane as a helical segment. Topologically, residues 341–346 (DRLGRK) are cytoplasmic. The chain crosses the membrane as a helical span at residues 347–367 (MLLYISSILMCITLFTFGTFF). Residues 368–376 (YVKELMDVT) are Extracellular-facing. A helical transmembrane segment spans residues 377–397 (AFGWIPLMSLIVYVIGFSFGF). Residues 398–410 (GPIPWLMMGEILP) are Cytoplasmic-facing. Residues 411–433 (VKIRGTAASVATAFNWSCTFVVT) form a helical membrane-spanning segment. The Extracellular portion of the chain corresponds to 434–446 (KTYEDLVLHIGPY). A helical transmembrane segment spans residues 447-467 (GTFWLFGTLVAVAFIFVIICV). The Cytoplasmic portion of the chain corresponds to 468–502 (PETRGRSLEEIERRFAGPVRRTSAIANLKPMPITI).

This sequence belongs to the major facilitator superfamily. Sugar transporter (TC 2.A.1.1) family. Trehalose transporter subfamily.

The protein resides in the cell membrane. Functionally, moderate-capacity facilitative transporter for trehalose. Does not transport maltose, sucrose or lactose. Mediates the bidirectional transfer of trehalose. Responsible for the transport of trehalose synthesized in the fat body and the incorporation of trehalose into other tissues that require a carbon source, thereby regulating trehalose levels in the hemolymph. This is Facilitated trehalose transporter Tret1 from Apis mellifera ligustica (Common honeybee).